A 232-amino-acid chain; its full sequence is MAAKLTKKRKTLAEKVQRDKTYPLSEAIKLIKECAKAKFNESIDVAINLGIDSRKSDQAIRGATVLPHGSGRTVKVAVFAQGDNVEKAKAAGADIVGLDDLAERIQGGDIDFDVVIATPETMRVVGKLGQVLGPRGLMPNPKVGTVTTDVASAVKNAKQGQVRYRTDKNGIIHCTIGKVNFEEKALEENFLALLNDIKKAKPSAAKGTYLKKLTLSSTMGPGIAIDRTTVGA.

Belongs to the universal ribosomal protein uL1 family. In terms of assembly, part of the 50S ribosomal subunit.

Binds directly to 23S rRNA. The L1 stalk is quite mobile in the ribosome, and is involved in E site tRNA release. Functionally, protein L1 is also a translational repressor protein, it controls the translation of the L11 operon by binding to its mRNA. The protein is Large ribosomal subunit protein uL1 of Coxiella burnetii (strain RSA 331 / Henzerling II).